A 586-amino-acid chain; its full sequence is Arginine--tRNA ligase (586 aa).

The 'HIGH' region signature appears at 131-141; it reads ANPTGPMHVGH.

It belongs to the class-I aminoacyl-tRNA synthetase family. Monomer.

It is found in the cytoplasm. The enzyme catalyses tRNA(Arg) + L-arginine + ATP = L-arginyl-tRNA(Arg) + AMP + diphosphate. The polypeptide is Arginine--tRNA ligase (Rhizobium rhizogenes (strain K84 / ATCC BAA-868) (Agrobacterium radiobacter)).